Consider the following 105-residue polypeptide: uncharacterized protein (105 aa).

A run of 2 helical transmembrane segments spans residues 26 to 46 and 66 to 86; these read NVLI…CIAI and SALA…TLAI.

Its subcellular location is the cell membrane. This is an uncharacterized protein from Mycoplasma pneumoniae (strain ATCC 29342 / M129 / Subtype 1) (Mycoplasmoides pneumoniae).